The chain runs to 837 residues: Protein translocase subunit SecA 1 (837 aa).

ATP contacts are provided by residues Gln85, 103-107, and Asp492; that span reads GEGKT. The segment covering 787–806 has biased composition (basic and acidic residues); it reads QEVAKGEAVHPKEDGEEPKR. The segment at 787-811 is disordered; that stretch reads QEVAKGEAVHPKEDGEEPKRKPVRK. Residues Cys821, Cys823, Cys832, and Cys833 each coordinate Zn(2+).

The protein belongs to the SecA family. As to quaternary structure, monomer and homodimer. Part of the essential Sec protein translocation apparatus which comprises SecA, SecYEG and auxiliary proteins SecDF. Other proteins may also be involved. Requires Zn(2+) as cofactor.

It is found in the cell membrane. The protein localises to the cytoplasm. It catalyses the reaction ATP + H2O + cellular proteinSide 1 = ADP + phosphate + cellular proteinSide 2.. Functionally, part of the Sec protein translocase complex. Interacts with the SecYEG preprotein conducting channel. Has a central role in coupling the hydrolysis of ATP to the transfer of proteins into and across the cell membrane, serving as an ATP-driven molecular motor driving the stepwise translocation of polypeptide chains across the membrane. In Geobacillus kaustophilus (strain HTA426), this protein is Protein translocase subunit SecA 1.